A 181-amino-acid chain; its full sequence is Putative ankyrin repeat protein RF_0782 (181 aa).

ANK repeat units lie at residues 24–53 and 54–83; these read YHYS…DINF and GSTP…NTQI.

This chain is Putative ankyrin repeat protein RF_0782, found in Rickettsia felis (strain ATCC VR-1525 / URRWXCal2) (Rickettsia azadi).